A 147-amino-acid chain; its full sequence is Peptide methionine sulfoxide reductase MsrB (147 aa).

One can recognise a MsrB domain in the interval 8-131; sequence KEELKKVLTE…NSASLKFIPK (124 aa). The Nucleophile role is filled by C120.

It belongs to the MsrB Met sulfoxide reductase family.

It catalyses the reaction L-methionyl-[protein] + [thioredoxin]-disulfide + H2O = L-methionyl-(R)-S-oxide-[protein] + [thioredoxin]-dithiol. This Clostridium perfringens (strain ATCC 13124 / DSM 756 / JCM 1290 / NCIMB 6125 / NCTC 8237 / Type A) protein is Peptide methionine sulfoxide reductase MsrB.